Reading from the N-terminus, the 292-residue chain is Elongation factor Ts (292 aa).

The segment at 79–82 (TDFV) is involved in Mg(2+) ion dislocation from EF-Tu.

It belongs to the EF-Ts family.

It localises to the cytoplasm. In terms of biological role, associates with the EF-Tu.GDP complex and induces the exchange of GDP to GTP. It remains bound to the aminoacyl-tRNA.EF-Tu.GTP complex up to the GTP hydrolysis stage on the ribosome. This is Elongation factor Ts from Malacoplasma penetrans (strain HF-2) (Mycoplasma penetrans).